Consider the following 228-residue polypeptide: UPF0173 metal-dependent hydrolase lin1612 (228 aa).

This sequence belongs to the UPF0173 family.

This is UPF0173 metal-dependent hydrolase lin1612 from Listeria innocua serovar 6a (strain ATCC BAA-680 / CLIP 11262).